The chain runs to 197 residues: Large ribosomal subunit protein eL15 (197 aa).

Composition is skewed to basic residues over residues 70–90 (PKGG…RMGK), 163–179 (RGKT…RKRG), and 187–197 (PSLRAHRRRGK). Disordered stretches follow at residues 70–99 (PKGG…GKSK) and 163–197 (RGKT…RRGK).

Belongs to the eukaryotic ribosomal protein eL15 family.

This Methanopyrus kandleri (strain AV19 / DSM 6324 / JCM 9639 / NBRC 100938) protein is Large ribosomal subunit protein eL15.